We begin with the raw amino-acid sequence, 148 residues long: NPC intracellular cholesterol transporter 2 homolog a (148 aa).

The first 16 residues, 1-16 (MLRYAVIACAALVVFA), serve as a signal peptide directing secretion. 3 cysteine pairs are disulfide-bonded: cysteine 24/cysteine 140, cysteine 39/cysteine 46, and cysteine 92/cysteine 99. A glycan (N-linked (GlcNAc...) asparagine) is linked at asparagine 51.

The protein belongs to the NPC2 family. Broadly expressed with a higher level of expression in many tissues, including midgut, salivary gland and ventral nerve cord.

Its subcellular location is the secreted. Functionally, functions redundantly with Npc2b in regulating sterol homeostasis and ecdysteroid biosynthesis, probably by controlling the availability of sterol substrate. This Drosophila melanogaster (Fruit fly) protein is NPC intracellular cholesterol transporter 2 homolog a.